Reading from the N-terminus, the 505-residue chain is MGDWNLLGGILEEVHSHSTIVGKIWLTILFIFRMLVLGVAAEDVWDDEQSAFACNTQQPGCNNICYDDAFPISLIRFWVLQIIFVSSPSLVYMGHALYRLRDFEKQRQKKKLYLRAQMENPELDLEEQQRVDKELRRLEEQKRIHKVPLKGCLLRTYVLHILTRSVLEVGFMIGQYILYGFQMHPIYKCTQAPCPNSVDCFVSRPTEKTIFMLFMHSIAAISLLLNILEIFHLGIRKIMRALDGKSSSGNTENETGPPFHSTNYSGTQQCMICSSLPERISLLQANNKQQVIRVNIPRSKSMWQIPHPRQLEVDVSCGKRDWAEKIESCAQLHVHSPCPHDRSARIQHPGQQPCHSVFGPKNAMSQSWFGTMTASQHRPSSALETWERSQGPEASGRSLTDRQSHFQGSDGSARESGVWTDRLGPGSRKASFLSRLMSEKGQRHSDSGSSRSLNSSCLDFSHGENSPSPLPSATGHRASMVSKSSHVDSPPHSSFIIHETYVYVY.

Residues 1–16 (MGDWNLLGGILEEVHS) lie on the Cytoplasmic side of the membrane. The helical transmembrane segment at 17–37 (HSTIVGKIWLTILFIFRMLVL) threads the bilayer. The Extracellular portion of the chain corresponds to 38–76 (GVAAEDVWDDEQSAFACNTQQPGCNNICYDDAFPISLIR). A helical membrane pass occupies residues 77 to 97 (FWVLQIIFVSSPSLVYMGHAL). The Cytoplasmic segment spans residues 98-165 (YRLRDFEKQR…TYVLHILTRS (68 aa)). The helical transmembrane segment at 166–186 (VLEVGFMIGQYILYGFQMHPI) threads the bilayer. Topologically, residues 187-209 (YKCTQAPCPNSVDCFVSRPTEKT) are extracellular. The chain crosses the membrane as a helical span at residues 210–230 (IFMLFMHSIAAISLLLNILEI). The Cytoplasmic segment spans residues 231–505 (FHLGIRKIMR…IIHETYVYVY (275 aa)). Polar residues predominate over residues 371 to 383 (TMTASQHRPSSAL). A disordered region spans residues 371-491 (TMTASQHRPS…SKSSHVDSPP (121 aa)). The span at 437-446 (MSEKGQRHSD) shows a compositional bias: basic and acidic residues. Residues 447–460 (SGSSRSLNSSCLDF) are compositionally biased toward low complexity.

It belongs to the connexin family. Alpha-type (group II) subfamily. As to quaternary structure, a connexon is composed of a hexamer of connexins. Low levels were detected in skin, heart, kidney, testis, ovary, intestine. Expression not detected in brain, sciatic nerve or liver. According to PubMed:15147297 expression is detected only in horizontal cells in the inner nuclear layer of the retina and not in other neurons of the central nervous system or tissues. Detected in the outer plexiform layer of the retina (at protein level).

The protein resides in the cell membrane. It localises to the cell junction. Its subcellular location is the gap junction. Functionally, one gap junction consists of a cluster of closely packed pairs of transmembrane channels, the connexons, through which materials of low MW diffuse from one cell to a neighboring cell. Involved in tracer coupling between horizontal cells of the retina. May play a role in the regulation of horizontal cell patterning. In Mus musculus (Mouse), this protein is Gap junction alpha-10 protein (Gja10).